Consider the following 286-residue polypeptide: Translocon-associated protein subunit alpha (286 aa).

The signal sequence occupies residues 1 to 21; it reads MRLLPRLLLLFLLAFPAAVLL. Over 22-207 the chain is Lumenal; the sequence is RGGPGGSLAL…EREDGLDGET (186 aa). Residues 46–75 show a composition bias toward acidic residues; that stretch reads IIEDEDDEAEVEEDEPTDLAEDKEEEDVSS. Residues 46-83 form a disordered region; that stretch reads IIEDEDDEAEVEEDEPTDLAEDKEEEDVSSEPEASPSA. Residues Asn-136 and Asn-191 are each glycosylated (N-linked (GlcNAc...) asparagine). The chain crosses the membrane as a helical span at residues 208-228; that stretch reads IFMYMFLAGLGLLVVVGLHQL. Residues 229–286 are Cytoplasmic-facing; sequence LESRKRKRPIQKVEMGTSSQNDVDMSWIPQETLNQINKASPRRQPRKRAQKRSVGSDE. Residues 236-286 are disordered; that stretch reads RPIQKVEMGTSSQNDVDMSWIPQETLNQINKASPRRQPRKRAQKRSVGSDE. Residues 244-266 show a composition bias toward polar residues; it reads GTSSQNDVDMSWIPQETLNQINK. Phosphoserine is present on Ser-247. Thr-260 is modified (phosphothreonine). Position 268 is a phosphoserine (Ser-268). The span at 268-279 shows a compositional bias: basic residues; that stretch reads SPRRQPRKRAQK.

This sequence belongs to the TRAP-alpha family. As to quaternary structure, heterotetramer of TRAP-alpha, TRAP-beta, TRAP-delta and TRAP-gamma. Interacts with palmitoylated calnexin (CALX), the interaction is required for efficient folding of glycosylated proteins.

The protein localises to the endoplasmic reticulum membrane. TRAP proteins are part of a complex whose function is to bind calcium to the ER membrane and thereby regulate the retention of ER resident proteins. May be involved in the recycling of the translocation apparatus after completion of the translocation process or may function as a membrane-bound chaperone facilitating folding of translocated proteins. The protein is Translocon-associated protein subunit alpha (Ssr1) of Mus musculus (Mouse).